A 345-amino-acid chain; its full sequence is Phosphoribosylformylglycinamidine cyclo-ligase (345 aa).

This sequence belongs to the AIR synthase family.

Its subcellular location is the cytoplasm. The catalysed reaction is 2-formamido-N(1)-(5-O-phospho-beta-D-ribosyl)acetamidine + ATP = 5-amino-1-(5-phospho-beta-D-ribosyl)imidazole + ADP + phosphate + H(+). The protein operates within purine metabolism; IMP biosynthesis via de novo pathway; 5-amino-1-(5-phospho-D-ribosyl)imidazole from N(2)-formyl-N(1)-(5-phospho-D-ribosyl)glycinamide: step 2/2. This chain is Phosphoribosylformylglycinamidine cyclo-ligase, found in Sodalis glossinidius (strain morsitans).